Consider the following 186-residue polypeptide: LIM domain-containing protein DDB_G0271356 (186 aa).

3 LIM zinc-binding domains span residues Pro-7–Ala-67, Pro-68–Phe-127, and Leu-128–Gly-186.

This chain is LIM domain-containing protein DDB_G0271356, found in Dictyostelium discoideum (Social amoeba).